A 304-amino-acid polypeptide reads, in one-letter code: UDP-N-acetylenolpyruvoylglucosamine reductase (304 aa).

Positions 28–193 (KTGGPADYLA…LTATFALTPG (166 aa)) constitute an FAD-binding PCMH-type domain. R172 is an active-site residue. The Proton donor role is filled by S222. E292 is an active-site residue.

The protein belongs to the MurB family. FAD serves as cofactor.

It localises to the cytoplasm. It carries out the reaction UDP-N-acetyl-alpha-D-muramate + NADP(+) = UDP-N-acetyl-3-O-(1-carboxyvinyl)-alpha-D-glucosamine + NADPH + H(+). Its pathway is cell wall biogenesis; peptidoglycan biosynthesis. Its function is as follows. Cell wall formation. This chain is UDP-N-acetylenolpyruvoylglucosamine reductase, found in Levilactobacillus brevis (strain ATCC 367 / BCRC 12310 / CIP 105137 / JCM 1170 / LMG 11437 / NCIMB 947 / NCTC 947) (Lactobacillus brevis).